A 249-amino-acid polypeptide reads, in one-letter code: Uridylate kinase (249 aa).

An ATP-binding site is contributed by 21–24 (KLSG). Gly-63 lines the UMP pocket. Residues Gly-64 and Arg-68 each contribute to the ATP site. UMP contacts are provided by residues Asp-84 and 145-152 (TGNPFVTT). Residues Thr-172, Tyr-178, and Asp-181 each coordinate ATP.

It belongs to the UMP kinase family. As to quaternary structure, homohexamer.

The protein localises to the cytoplasm. The enzyme catalyses UMP + ATP = UDP + ADP. It participates in pyrimidine metabolism; CTP biosynthesis via de novo pathway; UDP from UMP (UMPK route): step 1/1. Inhibited by UTP. In terms of biological role, catalyzes the reversible phosphorylation of UMP to UDP. The chain is Uridylate kinase from Francisella tularensis subsp. holarctica (strain FTNF002-00 / FTA).